The sequence spans 144 residues: Bacilliredoxin BT9727_3899 (144 aa).

Belongs to the bacilliredoxin family.

This is Bacilliredoxin BT9727_3899 from Bacillus thuringiensis subsp. konkukian (strain 97-27).